The primary structure comprises 199 residues: A-type ATP synthase subunit E (199 aa).

Belongs to the V-ATPase E subunit family. Has multiple subunits with at least A(3), B(3), C, D, E, F, H, I and proteolipid K(x).

It is found in the cell membrane. Its function is as follows. Component of the A-type ATP synthase that produces ATP from ADP in the presence of a proton gradient across the membrane. This chain is A-type ATP synthase subunit E, found in Pyrococcus abyssi (strain GE5 / Orsay).